The following is a 422-amino-acid chain: ATP-dependent RNA helicase RhlB (422 aa).

Residues 9–37 carry the Q motif motif; sequence QKFSDFALHPLVIKAIENQGFYHCTPIQA. The Helicase ATP-binding domain occupies 40–219; the sequence is FPITLAGRDV…FEQMNHPEYI (180 aa). 53–60 contributes to the ATP binding site; it reads AQTGTGKT. Residues 165 to 168 carry the DEAD box motif; that stretch reads DEAD. The Helicase C-terminal domain occupies 245–390; sequence RLLQTLIEEE…TSEYNKEALL (146 aa). Positions 394 to 422 are disordered; sequence PQPKRLQRHHRHYAGSRNQGASRKPRSPQ. Basic residues predominate over residues 398-407; that stretch reads RLQRHHRHYA.

The protein belongs to the DEAD box helicase family. RhlB subfamily. In terms of assembly, component of the RNA degradosome, which is a multiprotein complex involved in RNA processing and mRNA degradation.

It localises to the cytoplasm. It catalyses the reaction ATP + H2O = ADP + phosphate + H(+). DEAD-box RNA helicase involved in RNA degradation. Has RNA-dependent ATPase activity and unwinds double-stranded RNA. The chain is ATP-dependent RNA helicase RhlB from Hamiltonella defensa subsp. Acyrthosiphon pisum (strain 5AT).